Consider the following 230-residue polypeptide: 2-phytyl-1,4-naphtoquinone methyltransferase (230 aa).

The protein belongs to the class I-like SAM-binding methyltransferase superfamily. MenG/UbiE family.

It carries out the reaction demethylphylloquinol + S-adenosyl-L-methionine = phylloquinol + S-adenosyl-L-homocysteine + H(+). It functions in the pathway cofactor biosynthesis; phylloquinone biosynthesis. Methyltransferase required for the conversion of 2-phytyl-1,4-beta-naphthoquinol to phylloquinol. In Nostoc punctiforme (strain ATCC 29133 / PCC 73102), this protein is 2-phytyl-1,4-naphtoquinone methyltransferase.